We begin with the raw amino-acid sequence, 491 residues long: AAA-ATPase At2g46620 (491 aa).

A helical membrane pass occupies residues 1-21; it reads MGILWDSFLLLLVSTFALFLV. 238 to 245 is a binding site for ATP; the sequence is GPSGTGKS. The interval 423–460 is disordered; sequence GTGRRLLLENGSRKSTSEDVSDDMSGSLCGGGGGSSPA.

Belongs to the AAA ATPase family. BCS1 subfamily. Mg(2+) serves as cofactor.

The protein localises to the membrane. The catalysed reaction is ATP + H2O = ADP + phosphate + H(+). This is AAA-ATPase At2g46620 from Arabidopsis thaliana (Mouse-ear cress).